A 140-amino-acid polypeptide reads, in one-letter code: Small ribosomal subunit protein uS9A (140 aa).

The protein belongs to the universal ribosomal protein uS9 family. In terms of assembly, component of the small ribosomal subunit (SSU). Mature yeast ribosomes consist of a small (40S) and a large (60S) subunit. The 40S small subunit contains 1 molecule of ribosomal RNA (18S rRNA) and at least 33 different proteins. The large 60S subunit contains 3 rRNA molecules (25S, 5.8S and 5S rRNA) and at least 46 different proteins.

The protein localises to the cytoplasm. Functionally, component of the ribosome, a large ribonucleoprotein complex responsible for the synthesis of proteins in the cell. The small ribosomal subunit (SSU) binds messenger RNAs (mRNAs) and translates the encoded message by selecting cognate aminoacyl-transfer RNA (tRNA) molecules. The large subunit (LSU) contains the ribosomal catalytic site termed the peptidyl transferase center (PTC), which catalyzes the formation of peptide bonds, thereby polymerizing the amino acids delivered by tRNAs into a polypeptide chain. The nascent polypeptides leave the ribosome through a tunnel in the LSU and interact with protein factors that function in enzymatic processing, targeting, and the membrane insertion of nascent chains at the exit of the ribosomal tunnel. The protein is Small ribosomal subunit protein uS9A (rps1601) of Schizosaccharomyces pombe (strain 972 / ATCC 24843) (Fission yeast).